A 348-amino-acid polypeptide reads, in one-letter code: Photosystem II protein D1 (348 aa).

A run of 3 helical transmembrane segments spans residues 33–50 (YIGW…LATV), 122–137 (HFIF…EWEF), and 146–160 (WIFV…AASA). His122 serves as a coordination point for chlorophyll a. Pheophytin a is bound at residue Tyr130. Positions 174 and 193 each coordinate [CaMn4O5] cluster. Residues 201-222 (FHILGVAAVFGGSLFSAMHGSL) form a helical membrane-spanning segment. His202 contributes to the chlorophyll a binding site. A quinone is bound by residues His219 and 268–269 (SF). Position 219 (His219) interacts with Fe cation. His276 lines the Fe cation pocket. A helical membrane pass occupies residues 278-292 (FLAAWPVIGIWFTSL). His336, Glu337, Asp346, and Ala348 together coordinate [CaMn4O5] cluster.

The protein belongs to the reaction center PufL/M/PsbA/D family. In terms of assembly, PSII is composed of 1 copy each of membrane proteins PsbA, PsbB, PsbC, PsbD, PsbE, PsbF, PsbH, PsbI, PsbJ, PsbK, PsbL, PsbM, PsbT, PsbX, PsbY, PsbZ, Psb30/Ycf12, at least 3 peripheral proteins of the oxygen-evolving complex and a large number of cofactors. It forms dimeric complexes. The cofactor is The D1/D2 heterodimer binds P680, chlorophylls that are the primary electron donor of PSII, and subsequent electron acceptors. It shares a non-heme iron and each subunit binds pheophytin, quinone, additional chlorophylls, carotenoids and lipids. D1 provides most of the ligands for the Mn4-Ca-O5 cluster of the oxygen-evolving complex (OEC). There is also a Cl(-1) ion associated with D1 and D2, which is required for oxygen evolution. The PSII complex binds additional chlorophylls, carotenoids and specific lipids.. Post-translationally, tyr-165 forms a radical intermediate that is referred to as redox-active TyrZ, YZ or Y-Z.

The protein resides in the plastid. It localises to the chloroplast thylakoid membrane. It carries out the reaction 2 a plastoquinone + 4 hnu + 2 H2O = 2 a plastoquinol + O2. Photosystem II (PSII) is a light-driven water:plastoquinone oxidoreductase that uses light energy to abstract electrons from H(2)O, generating O(2) and a proton gradient subsequently used for ATP formation. It consists of a core antenna complex that captures photons, and an electron transfer chain that converts photonic excitation into a charge separation. The D1/D2 (PsbA/PsbD) reaction center heterodimer binds P680, the primary electron donor of PSII as well as several subsequent electron acceptors. This chain is Photosystem II protein D1, found in Heterocapsa triquetra (Dinoflagellate).